The chain runs to 91 residues: EEKVPYNVLKTKPVGIEKSVDEVGHISKVDETLSFQERLKGDFSQRPASITKKTAVKQVKESYSMADLNKMNDRELVETLGSIKWHQYTDL.

Requires Zn(2+) as cofactor.

Its subcellular location is the secreted. In terms of biological role, this protein is a metalloprotease with gelatinolytic and collagenolytic activity and is a component of the non-hemolytic enterotoxin complex (NHE). In Bacillus cereus, this protein is Non-hemolytic enterotoxin 105 kDa component.